Reading from the N-terminus, the 209-residue chain is Thymidine kinase (209 aa).

ATP-binding positions include 9 to 16 and 88 to 91; these read SAMNAGKT and DEAQ. Glutamate 89 acts as the Proton acceptor in catalysis.

This sequence belongs to the thymidine kinase family. In terms of assembly, homotetramer.

Its subcellular location is the cytoplasm. The catalysed reaction is thymidine + ATP = dTMP + ADP + H(+). This Xanthomonas oryzae pv. oryzae (strain MAFF 311018) protein is Thymidine kinase.